A 219-amino-acid chain; its full sequence is Interleukin-6 (219 aa).

An N-terminal signal peptide occupies residues 1–20 (MNSSTRYLSLLSALVVLVKG). Cysteines 103 and 111 form a disulfide.

It belongs to the IL-6 superfamily. Component of a hexamer of two molecules each of IL6, IL6R and IL6ST; first binds to IL6R to associate with the signaling subunit IL6ST. In terms of tissue distribution, expressed in spleen, gill and gastrointestinal tract, ovary and brain. Highest expression in ovary.

It is found in the secreted. Its function is as follows. Cytokine with a wide variety of biological functions in immunity, tissue regeneration, and metabolism. Binds to IL6R, then the complex associates to the signaling subunit IL6ST/gp130 to trigger the intracellular IL6-signaling pathway. The interaction with the membrane-bound IL6R and IL6ST stimulates 'classic signaling', whereas the binding of IL6 and soluble IL6R to IL6ST stimulates 'trans-signaling'. Alternatively, 'cluster signaling' occurs when membrane-bound IL6:IL6R complexes on transmitter cells activate IL6ST receptors on neighboring receiver cells. This Oncorhynchus mykiss (Rainbow trout) protein is Interleukin-6 (il6).